Reading from the N-terminus, the 141-residue chain is Ly6/PLAUR domain-containing protein 1 (141 aa).

A signal peptide spans 1 to 20; it reads MWVLGIAATFCGLFWLPGLA. Intrachain disulfides connect C25–C54, C28–C37, C46–C71, C77–C100, C88–C97, and C101–C106. The UPAR/Ly6 domain occupies 25–108; the sequence is CYQCEEFQLN…SCCNTPLCNG (84 aa). N-linked (GlcNAc...) asparagine glycosylation occurs at N45. A lipid anchor (GPI-anchor amidated glycine) is attached at G115. The propeptide at 116-141 is removed in mature form; that stretch reads SSASAIRPELFTTVLFFNLALCLAHC.

Interacts with CHRNA4 and nAChRs containing alpha-4:beta-2 (CHRNA4:CHRNB2) and alpha-7 (CHRNA7) subunits.

The protein resides in the cell membrane. Its function is as follows. Believed to act as a modulator of nicotinic acetylcholine receptors (nAChRs) activity. In vitro increases receptor desensitization and decreases affinity for ACh of alpha-4:beta-2-containing nAChRs. May play a role in the intracellular trafficking of alpha-4:beta-2 and alpha-7-containing nAChRs and may inhibit their expression at the cell surface. May be involved in the control of anxiety. This chain is Ly6/PLAUR domain-containing protein 1 (Lypd1), found in Rattus norvegicus (Rat).